The chain runs to 1488 residues: Chromosome partition protein MukB (1488 aa).

34 to 41 (GGNGAGKS) is a binding site for ATP. Coiled coils occupy residues 326–418 (LEAD…QYNQ), 444–472 (LDTF…QTAH), and 509–602 (RHLA…QRAP). Positions 666 to 783 (PGGAEDQRLN…SLPIFGRAAR (118 aa)) are flexible hinge. Coiled coils occupy residues 835–923 (EAEI…AKLE), 977–1116 (EMLS…AKAG), and 1209–1265 (VEAI…LQSV). The disordered stretch occupies residues 1049 to 1074 (ADSGAEERARQRRDELHAQLSNNRSR). Residues 1051 to 1065 (SGAEERARQRRDELH) are compositionally biased toward basic and acidic residues.

The protein belongs to the SMC family. MukB subfamily. Homodimerization via its hinge domain. Binds to DNA via its C-terminal region. Interacts, and probably forms a ternary complex, with MukE and MukF via its C-terminal region. The complex formation is stimulated by calcium or magnesium. Interacts with tubulin-related protein FtsZ.

It localises to the cytoplasm. The protein localises to the nucleoid. Plays a central role in chromosome condensation, segregation and cell cycle progression. Functions as a homodimer, which is essential for chromosome partition. Involved in negative DNA supercoiling in vivo, and by this means organize and compact chromosomes. May achieve or facilitate chromosome segregation by condensation DNA from both sides of a centrally located replisome during cell division. The polypeptide is Chromosome partition protein MukB (Salmonella gallinarum (strain 287/91 / NCTC 13346)).